Here is an 89-residue protein sequence, read N- to C-terminus: Cell division topological specificity factor (89 aa).

This sequence belongs to the MinE family.

Prevents the cell division inhibition by proteins MinC and MinD at internal division sites while permitting inhibition at polar sites. This ensures cell division at the proper site by restricting the formation of a division septum at the midpoint of the long axis of the cell. The protein is Cell division topological specificity factor of Legionella pneumophila (strain Paris).